A 493-amino-acid chain; its full sequence is Serine/threonine-protein kinase chk-1 (493 aa).

Residues 26 to 286 (YRVIRTLGEG…IEQIKTDPWF (261 aa)) form the Protein kinase domain. Residues 32-40 (LGEGAFGEV) and Lys56 each bind ATP. Asp150 serves as the catalytic Proton acceptor. Residues 308–348 (DENSPDCNISSTQQADAVSTAKRRHLETPDKVAHVERQNAS) are disordered. Over residues 312 to 324 (PDCNISSTQQADA) the composition is skewed to polar residues. Residues 333 to 344 (LETPDKVAHVER) show a composition bias toward basic and acidic residues.

The protein belongs to the protein kinase superfamily. CAMK Ser/Thr protein kinase family. NIM1 subfamily.

Its subcellular location is the cytoplasm. It localises to the nucleus. The enzyme catalyses L-seryl-[protein] + ATP = O-phospho-L-seryl-[protein] + ADP + H(+). It carries out the reaction L-threonyl-[protein] + ATP = O-phospho-L-threonyl-[protein] + ADP + H(+). Serine/threonine-protein kinase which is required for checkpoint-mediated cell cycle arrest and activation of DNA repair in response to the presence of DNA damage or unreplicated DNA. May also negatively regulate cell cycle progression during unperturbed cell cycles. Required for checkpoint mediated cell cycle arrest in response to DNA damage in germline cells. Essential for embryogenesis. The polypeptide is Serine/threonine-protein kinase chk-1 (chk-1) (Caenorhabditis briggsae).